A 213-amino-acid polypeptide reads, in one-letter code: uncharacterized protein (213 aa).

3 residues coordinate S-adenosyl-L-methionine: Gly-53, Glu-74, and Asp-97.

This sequence belongs to the methyltransferase superfamily. YrrT family.

In terms of biological role, could be a S-adenosyl-L-methionine-dependent methyltransferase. This is an uncharacterized protein from Bacillus velezensis (strain DSM 23117 / BGSC 10A6 / LMG 26770 / FZB42) (Bacillus amyloliquefaciens subsp. plantarum).